Reading from the N-terminus, the 145-residue chain is MLMPKRVKHRRVHRGRMTGKATRGNFVSNGEFGIQAMEPAWITSNQIEAARIAMTRFIKRGGKVWIKIFPDKPVTKKPAETRMGSGKGSPEYWVAVVKPGRVLFEIAGVPEETAREALRLAMHKLPVKCKFVTRETEMGGEANES.

Over residues 1 to 17 the composition is skewed to basic residues; that stretch reads MLMPKRVKHRRVHRGRM. Positions 1–22 are disordered; it reads MLMPKRVKHRRVHRGRMTGKAT.

This sequence belongs to the universal ribosomal protein uL16 family. In terms of assembly, part of the 50S ribosomal subunit.

Binds 23S rRNA and is also seen to make contacts with the A and possibly P site tRNAs. This is Large ribosomal subunit protein uL16 from Ruminiclostridium cellulolyticum (strain ATCC 35319 / DSM 5812 / JCM 6584 / H10) (Clostridium cellulolyticum).